Reading from the N-terminus, the 883-residue chain is Brevican core protein (883 aa).

The N-terminal stretch at 1 to 22 (MIPLLLSLLAALVLTQAPAALA) is a signal peptide. An Ig-like V-type domain is found at 35-154 (FRVRIGAAQL…SSDAVEVKVK (120 aa)). Intrachain disulfides connect Cys-56–Cys-136, Cys-178–Cys-249, Cys-202–Cys-223, Cys-276–Cys-351, and Cys-300–Cys-321. Asn-129 is a glycosylation site (N-linked (GlcNAc...) asparagine). Link domains are found at residues 156–251 (VVFL…YCYA) and 256–353 (GELF…YCFR). Asn-336 carries N-linked (GlcNAc...) asparagine glycosylation. Residues 389–574 (QEAVESESRG…EDGPSLLPET (186 aa)) are disordered. A Phosphoserine modification is found at Ser-413. O-linked (Xyl...) (chondroitin sulfate) serine glycosylation is present at Ser-413. A compositionally biased stretch (polar residues) spans 428–440 (ESETQSVAPPTGS). Acidic residues predominate over residues 441-451 (SEEEGEALEEE). Residues 452–467 (ERFKDTETPKEEKEQE) are compositionally biased toward basic and acidic residues. The GPI-anchor amidated serine moiety is linked to residue Ser-622. The 37-residue stretch at 622–658 (SSGDCIPSPCHNGGTCLEEKEGFRCLCVPGYGGDLCD) folds into the EGF-like domain. Disulfide bonds link Cys-626/Cys-637, Cys-631/Cys-646, Cys-648/Cys-657, Cys-692/Cys-784, Cys-760/Cys-776, Cys-791/Cys-834, and Cys-820/Cys-847. Residues 658–786 (DVGLHFCSPG…NYHLSYTCKM (129 aa)) form the C-type lectin domain. Residues 789-849 (VSCGPPPQLP…WEAPQISCVP (61 aa)) enclose the Sushi domain. The segment at 859-883 (MTAPEGPRGQLPRQRKALLTPPSSL) is disordered.

The protein belongs to the aggrecan/versican proteoglycan family. As to quaternary structure, interacts with TNR. In terms of processing, O-glycosylated; contains chondroitin sulfate. In terms of tissue distribution, brain.

The protein resides in the secreted. It is found in the extracellular space. It localises to the extracellular matrix. The protein localises to the membrane. Functionally, may play a role in the terminally differentiating and the adult nervous system during postnatal development. Could stabilize interactions between hyaluronan (HA) and brain proteoglycans. Isoform 2 may function as a chondroitin sulfate-bearing cell surface receptor. The sequence is that of Brevican core protein (Bcan) from Rattus norvegicus (Rat).